The following is an 80-amino-acid chain: UPF0125 protein XF_2346 (80 aa).

Belongs to the UPF0125 (RnfH) family.

The protein is UPF0125 protein XF_2346 of Xylella fastidiosa (strain 9a5c).